We begin with the raw amino-acid sequence, 314 residues long: Pseudouridine-5'-phosphate glycosidase (314 aa).

The Proton donor role is filled by E30. Residues K91 and V111 each contribute to the substrate site. Residue D143 coordinates Mn(2+). 145-147 (SAD) contacts substrate. The Nucleophile role is filled by K164.

Belongs to the pseudouridine-5'-phosphate glycosidase family. As to quaternary structure, homotrimer. Mn(2+) serves as cofactor.

It catalyses the reaction D-ribose 5-phosphate + uracil = psi-UMP + H2O. In terms of biological role, catalyzes the reversible cleavage of pseudouridine 5'-phosphate (PsiMP) to ribose 5-phosphate and uracil. Functions biologically in the cleavage direction, as part of a pseudouridine degradation pathway. The polypeptide is Pseudouridine-5'-phosphate glycosidase (Cupriavidus pinatubonensis (strain JMP 134 / LMG 1197) (Cupriavidus necator (strain JMP 134))).